Here is an 83-residue protein sequence, read N- to C-terminus: Exodeoxyribonuclease 7 small subunit (83 aa).

Residues 63 to 83 (VQNDDGTTGTEPLADTGESGR) are disordered.

Belongs to the XseB family. As to quaternary structure, heterooligomer composed of large and small subunits.

It localises to the cytoplasm. It carries out the reaction Exonucleolytic cleavage in either 5'- to 3'- or 3'- to 5'-direction to yield nucleoside 5'-phosphates.. In terms of biological role, bidirectionally degrades single-stranded DNA into large acid-insoluble oligonucleotides, which are then degraded further into small acid-soluble oligonucleotides. The chain is Exodeoxyribonuclease 7 small subunit from Gluconobacter oxydans (strain 621H) (Gluconobacter suboxydans).